We begin with the raw amino-acid sequence, 352 residues long: Putative hetero-Diels-Alderase (352 aa).

A signal peptide spans 1-20 (MRYHLSALVLVFTAFRETLT). N-linked (GlcNAc...) asparagine glycans are attached at residues asparagine 26, asparagine 41, asparagine 47, asparagine 135, asparagine 211, and asparagine 310.

It belongs to the eupF Diels-Alderase family.

It participates in secondary metabolite biosynthesis; terpenoid biosynthesis. Its function is as follows. Putative hetero-Diels-Alderase; part of the gene cluster that mediates the biosynthesis of eupenifeldin, a bistropolone meroterpenoid that acts as an antitumor agent. The first step of eupenifeldin biosynthesis is the biosynthesis of 3-methylorcinaldehyde performed by the non-reducing polyketide synthase eupA. Oxidative dearomatization of 3-methylorcinaldehyde likely catalyzed by the FAD-dependent monooxygenase eupB is followed by oxidative ring expansion by the 2-oxoglutarate-dependent dioxygenase eupC to provide the first tropolone metabolite, tropolone stipitaldehyde. In parallel, generation of sesquiterpene alpha-humulene from farnesylpyrophosphate (FPP) is catalyzed by the terpene cyclase eupE. The cytochrome P450 monooxygenase eupD then hydroxylates humulene to humulenol. The putative Diels-Alderase eupF probably catalyzes the formation of the tropolone-humulene skeleton by linking humulenol and the polyketide moiety. The short-chain dehydrogenase/reductase eupG and the flavin-dependent monooxygenase eupH are also essential for eupenifeldin biosynthesis and are likely the additional decorating enzymes of the tropolone-humulene skeleton to produce final eupenifeldin or derivatives. This chain is Putative hetero-Diels-Alderase, found in Phoma sp.